A 487-amino-acid chain; its full sequence is Glutamyl-tRNA(Gln) amidotransferase subunit A (487 aa).

Residues lysine 79 and serine 158 each act as charge relay system in the active site. Catalysis depends on serine 182, which acts as the Acyl-ester intermediate.

It belongs to the amidase family. GatA subfamily. As to quaternary structure, heterotrimer of A, B and C subunits.

The enzyme catalyses L-glutamyl-tRNA(Gln) + L-glutamine + ATP + H2O = L-glutaminyl-tRNA(Gln) + L-glutamate + ADP + phosphate + H(+). In terms of biological role, allows the formation of correctly charged Gln-tRNA(Gln) through the transamidation of misacylated Glu-tRNA(Gln) in organisms which lack glutaminyl-tRNA synthetase. The reaction takes place in the presence of glutamine and ATP through an activated gamma-phospho-Glu-tRNA(Gln). This Ehrlichia canis (strain Jake) protein is Glutamyl-tRNA(Gln) amidotransferase subunit A.